The primary structure comprises 338 residues: Penicillin V acylase (338 aa).

A propeptide spans 1–3 (MLG) (removed in mature form). Catalysis depends on Cys-4, which acts as the Nucleophile.

This sequence belongs to the peptidase C59 family. In terms of assembly, homotetramer. In terms of processing, expressed as an inactive precursor that is cleaved autocatalytically at Gly-3/Cys-4 to generate an active enzyme. Processing exposes a catalytic N-terminal nucleophile residue with a free alpha amino group.

It catalyses the reaction a penicillin + H2O = 6-aminopenicillanate + a carboxylate. Hydrolase activity is rapidly inhibited by lysine modifying reagents. Its function is as follows. Catalyzes the hydrolysis of penicillin V to 6-aminopenicillanate (6-APA). Exhibits high specificity for penicillin V. Penicillin G and other related compounds are hydrolyzed at less than 10% of the rate of penicillin V. Among the cephalosporins, cephalosporin C is resistant to cleavage, whereas cephalosporin G is cleaved at about 1% of the rate of cleavage of penicillin V. This chain is Penicillin V acylase, found in Lysinibacillus sphaericus (Bacillus sphaericus).